We begin with the raw amino-acid sequence, 998 residues long: Bifunctional glutamine synthetase adenylyltransferase/adenylyl-removing enzyme (998 aa).

Positions Met-1 to Leu-487 are adenylyl removase. Residues Gly-492–Ser-998 form an adenylyl transferase region.

Belongs to the GlnE family. Mg(2+) is required as a cofactor.

The catalysed reaction is [glutamine synthetase]-O(4)-(5'-adenylyl)-L-tyrosine + phosphate = [glutamine synthetase]-L-tyrosine + ADP. It catalyses the reaction [glutamine synthetase]-L-tyrosine + ATP = [glutamine synthetase]-O(4)-(5'-adenylyl)-L-tyrosine + diphosphate. In terms of biological role, involved in the regulation of glutamine synthetase GlnA, a key enzyme in the process to assimilate ammonia. When cellular nitrogen levels are high, the C-terminal adenylyl transferase (AT) inactivates GlnA by covalent transfer of an adenylyl group from ATP to specific tyrosine residue of GlnA, thus reducing its activity. Conversely, when nitrogen levels are low, the N-terminal adenylyl removase (AR) activates GlnA by removing the adenylyl group by phosphorolysis, increasing its activity. The regulatory region of GlnE binds the signal transduction protein PII (GlnB) which indicates the nitrogen status of the cell. In Mycobacterium avium (strain 104), this protein is Bifunctional glutamine synthetase adenylyltransferase/adenylyl-removing enzyme.